The following is a 95-amino-acid chain: DNA-directed RNA polymerase subunit Rpo11 (95 aa).

This sequence belongs to the archaeal Rpo11/eukaryotic RPB11/RPC19 RNA polymerase subunit family. In terms of assembly, part of the RNA polymerase complex.

The protein resides in the cytoplasm. The enzyme catalyses RNA(n) + a ribonucleoside 5'-triphosphate = RNA(n+1) + diphosphate. DNA-dependent RNA polymerase (RNAP) catalyzes the transcription of DNA into RNA using the four ribonucleoside triphosphates as substrates. The sequence is that of DNA-directed RNA polymerase subunit Rpo11 from Pyrococcus abyssi (strain GE5 / Orsay).